We begin with the raw amino-acid sequence, 193 residues long: Orotate phosphoribosyltransferase (193 aa).

Residues Arg85, Lys89, His91, and 111–119 (DDVLTTGKS) contribute to the 5-phospho-alpha-D-ribose 1-diphosphate site. The orotate site is built by Thr115 and Arg143.

The protein belongs to the purine/pyrimidine phosphoribosyltransferase family. PyrE subfamily. Homodimer. Mg(2+) serves as cofactor.

It catalyses the reaction orotidine 5'-phosphate + diphosphate = orotate + 5-phospho-alpha-D-ribose 1-diphosphate. Its pathway is pyrimidine metabolism; UMP biosynthesis via de novo pathway; UMP from orotate: step 1/2. Functionally, catalyzes the transfer of a ribosyl phosphate group from 5-phosphoribose 1-diphosphate to orotate, leading to the formation of orotidine monophosphate (OMP). This Pyrobaculum islandicum (strain DSM 4184 / JCM 9189 / GEO3) protein is Orotate phosphoribosyltransferase.